Consider the following 543-residue polypeptide: Hydroxylamine reductase (543 aa).

[4Fe-4S] cluster-binding residues include C5, C8, C17, and C23. The hybrid [4Fe-2O-2S] cluster site is built by H236, E260, C304, C398, C426, C451, E486, and K488. C398 carries the cysteine persulfide modification.

It belongs to the HCP family. The cofactor is [4Fe-4S] cluster. It depends on hybrid [4Fe-2O-2S] cluster as a cofactor.

It is found in the cytoplasm. It carries out the reaction A + NH4(+) + H2O = hydroxylamine + AH2 + H(+). Functionally, catalyzes the reduction of hydroxylamine to form NH(3) and H(2)O. This chain is Hydroxylamine reductase, found in Bacteroides fragilis (strain ATCC 25285 / DSM 2151 / CCUG 4856 / JCM 11019 / LMG 10263 / NCTC 9343 / Onslow / VPI 2553 / EN-2).